A 194-amino-acid polypeptide reads, in one-letter code: Imidazoleglycerol-phosphate dehydratase (194 aa).

This sequence belongs to the imidazoleglycerol-phosphate dehydratase family.

Its subcellular location is the cytoplasm. The enzyme catalyses D-erythro-1-(imidazol-4-yl)glycerol 3-phosphate = 3-(imidazol-4-yl)-2-oxopropyl phosphate + H2O. The protein operates within amino-acid biosynthesis; L-histidine biosynthesis; L-histidine from 5-phospho-alpha-D-ribose 1-diphosphate: step 6/9. In Bacillus cereus (strain ATCC 14579 / DSM 31 / CCUG 7414 / JCM 2152 / NBRC 15305 / NCIMB 9373 / NCTC 2599 / NRRL B-3711), this protein is Imidazoleglycerol-phosphate dehydratase.